We begin with the raw amino-acid sequence, 291 residues long: MESPWNELTLAFSRTSMFPFFDIAHYLVSVMALKHQPGAAALAWKNPLSSWFTAMLHCFGGGILSCVLLAEPPLRFLANNTNILLASSIWYIAFFCPCDLISQAYSFLPVQLLAAGMKEVTRTWKIVGGVTHANSYYKNGWIVMIAVGWARGAGGSIITNFEQLVKGCWKPEAEEWLKMSYPAKVTLLGSVIFTFQQTKYLAISKHNLMFLFTVFLVATKITMMITKTALVPFACFEDTLSRMLFGWQQQFSPCEKKSETKSSFNGTGSSTSKPVANASDKVKKKHSKKTE.

Topologically, residues 1 to 15 (MESPWNELTLAFSRT) are lumenal. A helical transmembrane segment spans residues 16-33 (SMFPFFDIAHYLVSVMAL). The Cytoplasmic segment spans residues 34-47 (KHQPGAAALAWKNP). A helical membrane pass occupies residues 48–69 (LSSWFTAMLHCFGGGILSCVLL). Residues 70 to 80 (AEPPLRFLANN) are Lumenal-facing. The chain crosses the membrane as a helical span at residues 81 to 100 (TNILLASSIWYIAFFCPCDL). The Cytoplasmic segment spans residues 101 to 103 (ISQ). Residues 104 to 122 (AYSFLPVQLLAAGMKEVTR) form a helical membrane-spanning segment. 2 residues coordinate a 1,2-diacyl-sn-glycero-3-phospho-(1D-myo-inositol-4,5-bisphosphate): Lys-118 and Arg-122. Residues 123 to 138 (TWKIVGGVTHANSYYK) lie on the Lumenal side of the membrane. Residues 139-156 (NGWIVMIAVGWARGAGGS) form a helical membrane-spanning segment. Topologically, residues 157–179 (IITNFEQLVKGCWKPEAEEWLKM) are cytoplasmic. The helical transmembrane segment at 180–196 (SYPAKVTLLGSVIFTFQ) threads the bilayer. At 197 to 207 (QTKYLAISKHN) the chain is on the lumenal side. A helical membrane pass occupies residues 208-225 (LMFLFTVFLVATKITMMI). At 226–291 (TKTALVPFAC…VKKKHSKKTE (66 aa)) the chain is on the cytoplasmic side. The tract at residues 257 to 291 (KSETKSSFNGTGSSTSKPVANASDKVKKKHSKKTE) is disordered. Over residues 261–274 (KSSFNGTGSSTSKP) the composition is skewed to polar residues. Ser-262 carries the phosphoserine modification. Residues 282–291 (VKKKHSKKTE) show a composition bias toward basic residues.

The protein belongs to the TMEM38 family. In terms of assembly, homotrimer; conformation seems to be controled by binding to diacylglycerol (DAG).

It localises to the endoplasmic reticulum membrane. The enzyme catalyses K(+)(in) = K(+)(out). Its activity is regulated as follows. Channel activity is activated by increased cytosolic Ca(2+) levels and blocked by luminal high Ca(2+) levels. Functionally, intracellular monovalent cation channel required for maintenance of rapid intracellular calcium release. Acts as a potassium counter-ion channel that functions in synchronization with calcium release from intracellular stores. Activated by increased cytosolic Ca(2+) levels. The protein is Trimeric intracellular cation channel type B (TMEM38B) of Bos taurus (Bovine).